Here is a 406-residue protein sequence, read N- to C-terminus: Subtilisin-like protease CPC735_023170 (406 aa).

The signal sequence occupies residues 1 to 20; sequence MRLFQSTCVLVGTVLPLFTA. The propeptide occupies 21–118; the sequence is FPISSPREIE…VEPDSMAYVT (98 aa). Positions 35–115 constitute an Inhibitor I9 domain; the sequence is KYIITFKKGI…VESVEPDSMA (81 aa). Residue N125 is glycosylated (N-linked (GlcNAc...) asparagine). The Peptidase S8 domain occupies 127 to 406; it reads TYGPRRISHR…NKLAYNGSGK (280 aa). Catalysis depends on charge relay system residues D161 and H192. N239 carries N-linked (GlcNAc...) asparagine glycosylation. The interval 283 to 309 is disordered; the sequence is NDGRDAGRNSPGSAPESITVGSINSRR. Residue N346 is glycosylated (N-linked (GlcNAc...) asparagine). The active-site Charge relay system is the S351. Residue N402 is glycosylated (N-linked (GlcNAc...) asparagine).

It belongs to the peptidase S8 family.

The protein resides in the secreted. In terms of biological role, secreted subtilisin-like serine protease with keratinolytic activity that contributes to pathogenicity. The chain is Subtilisin-like protease CPC735_023170 from Coccidioides posadasii (strain C735) (Valley fever fungus).